A 403-amino-acid chain; its full sequence is MSHRKFSAPRHGSLGFLPRKRSSRHRGKVKSFPKDDPSKPVHLTAFLGYKAGMTHIVREVDRPGSKVNKKEVVVAVTIVETPPMVVVGIVGYVETPRGLRTFKTVFAEHISDECKRRFYKNWHKSKKKAFTKYCKKWQDEDGKKQLEKDFSSMKKYCQVIRVIAHTQMRLLPLRQKKAHLMEIQVNGGTVAEKLDWARERLEQQVPVNQVFGQDEMIDVIGVTKGKGYKGVTSRWHTKKLPRKTHRGLRKVACIGARHPARVAFSVARAGQKGYHHRTEINKKIYKIGQGYLIKDGKLIKNNASTDYDLSDKSINPLGGFVHYGEVTNDFVMLKGCVVGTKKRVLTLRKSLLVQTKRRALEKIDLKFIDTTSKFGHGRFQTMEEKKAFMGPLKKDRIAKEEGA.

A disordered region spans residues 1–37; sequence MSHRKFSAPRHGSLGFLPRKRSSRHRGKVKSFPKDDP. A Phosphoserine modification is found at Ser13. Over residues 18–31 the composition is skewed to basic residues; the sequence is PRKRSSRHRGKVKS. Lys39 is covalently cross-linked (Glycyl lysine isopeptide (Lys-Gly) (interchain with G-Cter in SUMO2)). Lys136 is subject to N6-acetyllysine. Glycyl lysine isopeptide (Lys-Gly) (interchain with G-Cter in SUMO2) cross-links involve residues Lys224 and Lys226. His245 is modified (tele-methylhistidine). Lys286 and Lys294 each carry N6-acetyllysine; alternate. Residue Lys286 forms a Glycyl lysine isopeptide (Lys-Gly) (interchain with G-Cter in SUMO2); alternate linkage. Residue Lys294 forms a Glycyl lysine isopeptide (Lys-Gly) (interchain with G-Cter in SUMO1); alternate linkage. Ser304 is subject to Phosphoserine. Lys366 bears the N6-acetyllysine; alternate mark. A Glycyl lysine isopeptide (Lys-Gly) (interchain with G-Cter in SUMO2); alternate cross-link involves residue Lys366. At Lys373 the chain carries N6-acetyllysine. Residues Lys386, Lys393, and Lys399 each participate in a glycyl lysine isopeptide (Lys-Gly) (interchain with G-Cter in SUMO2) cross-link.

This sequence belongs to the universal ribosomal protein uL3 family. As to quaternary structure, component of the large ribosomal subunit. Interacts with DHX33. Constitutively monomethylated at His-245 by METTL18. Methylation at His-245 regulates translation elongation by slowing ribosome traversal on tyrosine codons: slower elongation provides enough time for proper folding of synthesized proteins and prevents cellular aggregation of tyrosine-rich proteins It is not required for incorporation of RPL3 into ribosomes.

It localises to the nucleus. Its subcellular location is the nucleolus. The protein resides in the cytoplasm. In terms of biological role, component of the large ribosomal subunit. The ribosome is a large ribonucleoprotein complex responsible for the synthesis of proteins in the cell. This is Large ribosomal subunit protein uL3 (RPL3) from Macaca fascicularis (Crab-eating macaque).